We begin with the raw amino-acid sequence, 382 residues long: 4-hydroxy-3-methylbut-2-en-1-yl diphosphate synthase (flavodoxin) (382 aa).

The [4Fe-4S] cluster site is built by Cys-273, Cys-276, Cys-308, and Glu-315.

Belongs to the IspG family. It depends on [4Fe-4S] cluster as a cofactor.

The enzyme catalyses (2E)-4-hydroxy-3-methylbut-2-enyl diphosphate + oxidized [flavodoxin] + H2O + 2 H(+) = 2-C-methyl-D-erythritol 2,4-cyclic diphosphate + reduced [flavodoxin]. It participates in isoprenoid biosynthesis; isopentenyl diphosphate biosynthesis via DXP pathway; isopentenyl diphosphate from 1-deoxy-D-xylulose 5-phosphate: step 5/6. In terms of biological role, converts 2C-methyl-D-erythritol 2,4-cyclodiphosphate (ME-2,4cPP) into 1-hydroxy-2-methyl-2-(E)-butenyl 4-diphosphate. The polypeptide is 4-hydroxy-3-methylbut-2-en-1-yl diphosphate synthase (flavodoxin) (Gluconacetobacter diazotrophicus (strain ATCC 49037 / DSM 5601 / CCUG 37298 / CIP 103539 / LMG 7603 / PAl5)).